The sequence spans 756 residues: 1,4-alpha-glucan branching enzyme GlgB (756 aa).

D431 acts as the Nucleophile in catalysis. The active-site Proton donor is the E484.

The protein belongs to the glycosyl hydrolase 13 family. GlgB subfamily. Monomer.

The enzyme catalyses Transfers a segment of a (1-&gt;4)-alpha-D-glucan chain to a primary hydroxy group in a similar glucan chain.. The protein operates within glycan biosynthesis; glycogen biosynthesis. Its function is as follows. Catalyzes the formation of the alpha-1,6-glucosidic linkages in glycogen by scission of a 1,4-alpha-linked oligosaccharide from growing alpha-1,4-glucan chains and the subsequent attachment of the oligosaccharide to the alpha-1,6 position. The chain is 1,4-alpha-glucan branching enzyme GlgB from Prochlorococcus marinus (strain MIT 9303).